Here is a 254-residue protein sequence, read N- to C-terminus: 3-deoxy-manno-octulosonate cytidylyltransferase (254 aa).

Belongs to the KdsB family.

It is found in the cytoplasm. The catalysed reaction is 3-deoxy-alpha-D-manno-oct-2-ulosonate + CTP = CMP-3-deoxy-beta-D-manno-octulosonate + diphosphate. Its pathway is nucleotide-sugar biosynthesis; CMP-3-deoxy-D-manno-octulosonate biosynthesis; CMP-3-deoxy-D-manno-octulosonate from 3-deoxy-D-manno-octulosonate and CTP: step 1/1. It participates in bacterial outer membrane biogenesis; lipopolysaccharide biosynthesis. Activates KDO (a required 8-carbon sugar) for incorporation into bacterial lipopolysaccharide in Gram-negative bacteria. The polypeptide is 3-deoxy-manno-octulosonate cytidylyltransferase (Bordetella pertussis (strain Tohama I / ATCC BAA-589 / NCTC 13251)).